A 163-amino-acid polypeptide reads, in one-letter code: Ribosome maturation factor RimP (163 aa).

The disordered stretch occupies residues 66–85 (ALDRDDPVPGPPYELEVSSP).

This sequence belongs to the RimP family.

Its subcellular location is the cytoplasm. Functionally, required for maturation of 30S ribosomal subunits. In Kocuria rhizophila (strain ATCC 9341 / DSM 348 / NBRC 103217 / DC2201), this protein is Ribosome maturation factor RimP.